Here is a 598-residue protein sequence, read N- to C-terminus: Elongation factor 4 (598 aa).

The 178-residue stretch at 4–181 (SKIRNFSIIA…AVIEKIPAPK (178 aa)) folds into the tr-type G domain. GTP-binding positions include 16 to 21 (DHGKST) and 128 to 131 (NKID).

It belongs to the TRAFAC class translation factor GTPase superfamily. Classic translation factor GTPase family. LepA subfamily.

The protein localises to the cell membrane. It catalyses the reaction GTP + H2O = GDP + phosphate + H(+). Required for accurate and efficient protein synthesis under certain stress conditions. May act as a fidelity factor of the translation reaction, by catalyzing a one-codon backward translocation of tRNAs on improperly translocated ribosomes. Back-translocation proceeds from a post-translocation (POST) complex to a pre-translocation (PRE) complex, thus giving elongation factor G a second chance to translocate the tRNAs correctly. Binds to ribosomes in a GTP-dependent manner. The protein is Elongation factor 4 of Mycoplasma mobile (strain ATCC 43663 / 163K / NCTC 11711) (Mesomycoplasma mobile).